We begin with the raw amino-acid sequence, 204 residues long: Large ribosomal subunit protein uL4 (204 aa).

A disordered region spans residues 47-69 (KAQKNRAAVSGGGKKPWRQKGTG).

Belongs to the universal ribosomal protein uL4 family. In terms of assembly, part of the 50S ribosomal subunit.

One of the primary rRNA binding proteins, this protein initially binds near the 5'-end of the 23S rRNA. It is important during the early stages of 50S assembly. It makes multiple contacts with different domains of the 23S rRNA in the assembled 50S subunit and ribosome. Functionally, forms part of the polypeptide exit tunnel. The protein is Large ribosomal subunit protein uL4 of Teredinibacter turnerae (strain ATCC 39867 / T7901).